Reading from the N-terminus, the 150-residue chain is Flagellar assembly factor FliW (150 aa).

Belongs to the FliW family. Interacts with translational regulator CsrA and flagellin(s).

The protein resides in the cytoplasm. In terms of biological role, acts as an anti-CsrA protein, binds CsrA and prevents it from repressing translation of its target genes, one of which is flagellin. Binds to flagellin and participates in the assembly of the flagellum. In Leptospira interrogans serogroup Icterohaemorrhagiae serovar Lai (strain 56601), this protein is Flagellar assembly factor FliW.